The chain runs to 879 residues: uncharacterized protein (879 aa).

A helical membrane pass occupies residues 14-34; it reads LAFFGCGVSVGAFFTLFLMGT.

The protein resides in the membrane. This is an uncharacterized protein from Mycoplasma pneumoniae (strain ATCC 29342 / M129 / Subtype 1) (Mycoplasmoides pneumoniae).